The sequence spans 74 residues: MVSKSLIVLLLVSVLVSTFFTTEAYPASYDDDFDALDDLDDLDLDDLLDLEPADLVLLDMWANMLDSQDFEDFE.

The N-terminal stretch at 1–24 (MVSKSLIVLLLVSVLVSTFFTTEA) is a signal peptide.

It belongs to the non-disulfide-bridged peptide (NDBP) superfamily. Long chain multifunctional peptide (group 2) family. As to expression, expressed by the venom gland.

The protein resides in the secreted. In terms of biological role, may be an antimicrobial peptide. This Tityus costatus (Brazilian scorpion) protein is Anionic peptide clone 8.